A 632-amino-acid chain; its full sequence is MHGLLLAGLAAALPLGVAGLPARQQSGLSPRGIDINPYRFASMAKYSEHKATSQMVHSFSYSKDDDYVATATKLVKSTFPNMTFRTVKDHYIGTNGIGHVHFKQTAHGIDIDNADFNVNIGRDGKVFTFGNSFYEGEMPKTNPLTKRDFADPVKALHGAIKTLKLPVKPQSAKAMPMKEAETFMFEGTSGALSEPMAKLVYIQKDGKLHLTWRVETDVGDNWLLSYVDSKETETVHNVVDYVASADYKVFAWGLNDPTEGQPTMIKDPWNTTGSGSPFTWHGDGEMDYTVTRGNNIAAQDNPSGGGQWENNYRPESPELSFVYEYNEQMEPEQYKDFAITQLFYTTNTFHDLLYSFGFTEEAGNFQMNNNGKGGEGNDFAICNAQDGSGTNNANFATPPDGQNGRMRMYTWTTAQPSRDGDLEAGIVIHEYAHGLSNRLCGGPANSNCLSELEAGGMGEGWGDFYATAIRLKQDDTRETDYTMGEWAANMEGGIREYPYSTNMQTNPYTYADVEGMSEVHGIGTVWATILYDVLWNLIDEHGMSKNIMPKFVNGAPSDGRNLAMKLVLDGMTLMPCNPNFVQARDAIIDADQALTNGQNKCALMKAFSKRGLGSNYKHGKNRVNNFDMPADC.

A signal peptide spans 1 to 19; it reads MHGLLLAGLAAALPLGVAG. Residues 20 to 244 constitute a propeptide that is removed on maturation; that stretch reads LPARQQSGLS…VHNVVDYVAS (225 aa). N-linked (GlcNAc...) asparagine glycosylation is present at N270. Position 429 (H429) interacts with Zn(2+). The active site involves E430. H433 is a Zn(2+) binding site.

The protein belongs to the peptidase M36 family. The cofactor is Zn(2+).

It localises to the secreted. Functionally, secreted metalloproteinase probably acting as a virulence factor. The sequence is that of Extracellular metalloproteinase 2 (MEP2) from Trichophyton tonsurans (Scalp ringworm fungus).